Here is a 485-residue protein sequence, read N- to C-terminus: NADH-quinone oxidoreductase subunit N (485 aa).

14 helical membrane-spanning segments follow: residues alanine 10–tryptophan 30, phenylalanine 35–valine 55, phenylalanine 75–leucine 95, glutamate 104–histidine 124, leucine 125–tyrosine 145, tyrosine 159–alanine 179, isoleucine 203–phenylalanine 223, proline 235–methionine 255, leucine 271–glutamine 291, leucine 297–glutamine 317, glycine 327–methionine 347, alanine 374–glycine 394, tryptophan 408–arginine 427, and alanine 449–isoleucine 469.

The protein belongs to the complex I subunit 2 family. In terms of assembly, NDH-1 is composed of 13 different subunits. Subunits NuoA, H, J, K, L, M, N constitute the membrane sector of the complex.

Its subcellular location is the cell inner membrane. It catalyses the reaction a quinone + NADH + 5 H(+)(in) = a quinol + NAD(+) + 4 H(+)(out). In terms of biological role, NDH-1 shuttles electrons from NADH, via FMN and iron-sulfur (Fe-S) centers, to quinones in the respiratory chain. The immediate electron acceptor for the enzyme in this species is believed to be ubiquinone. Couples the redox reaction to proton translocation (for every two electrons transferred, four hydrogen ions are translocated across the cytoplasmic membrane), and thus conserves the redox energy in a proton gradient. This Yersinia enterocolitica serotype O:8 / biotype 1B (strain NCTC 13174 / 8081) protein is NADH-quinone oxidoreductase subunit N.